Reading from the N-terminus, the 198-residue chain is Probable chemoreceptor glutamine deamidase CheD (198 aa).

Belongs to the CheD family.

It carries out the reaction L-glutaminyl-[protein] + H2O = L-glutamyl-[protein] + NH4(+). In terms of biological role, probably deamidates glutamine residues to glutamate on methyl-accepting chemotaxis receptors (MCPs), playing an important role in chemotaxis. In Xanthomonas axonopodis pv. citri (strain 306), this protein is Probable chemoreceptor glutamine deamidase CheD.